The sequence spans 314 residues: DNA-directed RNA polymerase subunit alpha (314 aa).

Positions Met1–Asn228 are alpha N-terminal domain (alpha-NTD). Residues Pro243–Ala314 form an alpha C-terminal domain (alpha-CTD) region.

This sequence belongs to the RNA polymerase alpha chain family. As to quaternary structure, homodimer. In cyanobacteria the RNAP catalytic core is composed of 2 alpha, 1 beta, 1 beta', 1 gamma and 1 omega subunit. When a sigma factor is associated with the core the holoenzyme is formed, which can initiate transcription.

It catalyses the reaction RNA(n) + a ribonucleoside 5'-triphosphate = RNA(n+1) + diphosphate. In terms of biological role, DNA-dependent RNA polymerase catalyzes the transcription of DNA into RNA using the four ribonucleoside triphosphates as substrates. The chain is DNA-directed RNA polymerase subunit alpha from Synechocystis sp. (strain ATCC 27184 / PCC 6803 / Kazusa).